The primary structure comprises 90 residues: Sec-independent protein translocase protein TatAo (90 aa).

A helical membrane pass occupies residues 8-28 (FPGLPGGPELLIVLLIVVLLF). The segment at 39–90 (SSGQAMGEFRRGREEIEEELKKGAEGGDDEGENGDEAEADDADATETEAESR) is disordered. The span at 46-63 (EFRRGREEIEEELKKGAE) shows a compositional bias: basic and acidic residues. The segment covering 64–90 (GGDDEGENGDEAEADDADATETEAESR) has biased composition (acidic residues).

It belongs to the TatA/E family. As to quaternary structure, forms a complex with TatC. Cytoplasmic and membrane-bound TatA form high-molecular-weight complexes.

It is found in the cell membrane. It localises to the cytoplasm. Functionally, part of the twin-arginine translocation (Tat) system that transports large folded proteins containing a characteristic twin-arginine motif in their signal peptide across membranes. TatA could form the protein-conducting channel of the Tat system. The protein is Sec-independent protein translocase protein TatAo of Haloferax volcanii (strain ATCC 29605 / DSM 3757 / JCM 8879 / NBRC 14742 / NCIMB 2012 / VKM B-1768 / DS2) (Halobacterium volcanii).